Consider the following 312-residue polypeptide: D-alanine--D-alanine ligase (312 aa).

Residues 108-308 (KLVWQQTGIP…YSELVVKVLS (201 aa)) enclose the ATP-grasp domain. 138–193 (AAKLGVPLFVKPASEGSSVAVEKVKSADALPAALEEAAKHDKIVIVEKSIEGGGEY) is a binding site for ATP. Mg(2+) contacts are provided by Asp262, Glu275, and Asn277.

The protein belongs to the D-alanine--D-alanine ligase family. Mg(2+) serves as cofactor. The cofactor is Mn(2+).

It localises to the cytoplasm. The catalysed reaction is 2 D-alanine + ATP = D-alanyl-D-alanine + ADP + phosphate + H(+). The protein operates within cell wall biogenesis; peptidoglycan biosynthesis. Cell wall formation. This chain is D-alanine--D-alanine ligase, found in Burkholderia pseudomallei (strain 668).